Reading from the N-terminus, the 690-residue chain is Elongation factor G (690 aa).

In terms of domain architecture, tr-type G spans 8 to 283 (EDYRNFGIMA…AVVDYLPSPV (276 aa)). GTP-binding positions include 17–24 (AHIDAGKT), 81–85 (DTPGH), and 135–138 (NKMD).

This sequence belongs to the TRAFAC class translation factor GTPase superfamily. Classic translation factor GTPase family. EF-G/EF-2 subfamily.

Its subcellular location is the cytoplasm. In terms of biological role, catalyzes the GTP-dependent ribosomal translocation step during translation elongation. During this step, the ribosome changes from the pre-translocational (PRE) to the post-translocational (POST) state as the newly formed A-site-bound peptidyl-tRNA and P-site-bound deacylated tRNA move to the P and E sites, respectively. Catalyzes the coordinated movement of the two tRNA molecules, the mRNA and conformational changes in the ribosome. The polypeptide is Elongation factor G (Rhodopseudomonas palustris (strain BisA53)).